Consider the following 520-residue polypeptide: GMP synthase [glutamine-hydrolyzing] (520 aa).

The Glutamine amidotransferase type-1 domain maps to 9-202 (TVLIVDFGSQ…VHNIAGIEGD (194 aa)). Cys-86 acts as the Nucleophile in catalysis. Residues His-176 and Glu-178 contribute to the active site. Residues 203–395 (WTMRAYREHA…LGLPESFIGR (193 aa)) form the GMPS ATP-PPase domain. 230-236 (SGGVDSS) lines the ATP pocket.

In terms of assembly, homodimer.

It catalyses the reaction XMP + L-glutamine + ATP + H2O = GMP + L-glutamate + AMP + diphosphate + 2 H(+). Its pathway is purine metabolism; GMP biosynthesis; GMP from XMP (L-Gln route): step 1/1. Functionally, catalyzes the synthesis of GMP from XMP. The protein is GMP synthase [glutamine-hydrolyzing] of Mesorhizobium japonicum (strain LMG 29417 / CECT 9101 / MAFF 303099) (Mesorhizobium loti (strain MAFF 303099)).